The sequence spans 414 residues: Esterase FrsA (414 aa).

The protein belongs to the FrsA family.

It carries out the reaction a carboxylic ester + H2O = an alcohol + a carboxylate + H(+). Its function is as follows. Catalyzes the hydrolysis of esters. This Escherichia coli O157:H7 protein is Esterase FrsA.